The sequence spans 415 residues: Alpha-2Db adrenergic receptor (415 aa).

Residues 1–33 (MDLSTITFLLPNSSEDTNGTSAPRLPPHSQCAS) are Extracellular-facing. N-linked (GlcNAc...) asparagine glycans are attached at residues Asn-12 and Asn-18. The helical transmembrane segment at 34 to 58 (VLIVLVVTVIILVTIVGNVLVVVAV) threads the bilayer. Residues 59–70 (FTSRALRAPQNL) are Cytoplasmic-facing. A helical transmembrane segment spans residues 71–96 (FLVSLAAADILVATLVIPFSLANEVM). The Extracellular segment spans residues 97–106 (GYWYLGSTWC). Cys-106 and Cys-179 are oxidised to a cystine. The chain crosses the membrane as a helical span at residues 107 to 129 (AFYLALDVLFCTSSIVHLCAISL). The Cytoplasmic segment spans residues 130-150 (DRYWSVTKAVSYNLKRTPRRI). The helical transmembrane segment at 151 to 173 (KIMITVVWVISAVISFPPLLMTK) threads the bilayer. At 174–184 (HDELECLLNNE) the chain is on the extracellular side. An N-linked (GlcNAc...) asparagine glycan is attached at Asn-183. Residues 185 to 208 (TWYILSSCIVSFFAPGLIMILVYC) traverse the membrane as a helical segment. Topologically, residues 209-339 (RIYRVAKQRA…QMREKRFTFV (131 aa)) are cytoplasmic. A disordered region spans residues 234–299 (QSETCFVRKG…EGAQSCPKPN (66 aa)). Residues 276–286 (NRHRNSRFAKS) are compositionally biased toward basic residues. The chain crosses the membrane as a helical span at residues 340–363 (LAVVMGVFVLCWFPFFFTYSLHAI). Residues 364–376 (CRKSCTIPDSLFN) are Extracellular-facing. Residues 377-397 (LFFWIGYCNSSVNPIIYTIFN) form a helical membrane-spanning segment. Over 398 to 415 (RDFRKAFKKIMCRHSTRT) the chain is Cytoplasmic.

It belongs to the G-protein coupled receptor 1 family. Adrenergic receptor subfamily. ADRA2D sub-subfamily.

Its subcellular location is the cell membrane. Its function is as follows. Alpha-2 adrenergic receptors mediate the catecholamine-induced inhibition of adenylate cyclase through the action of G proteins. The order of potency for this receptor is dexmedetomidine &gt; norepinephrine = epinephrine &gt; oxymetazoline. In Danio rerio (Zebrafish), this protein is Alpha-2Db adrenergic receptor (adra2db).